The primary structure comprises 347 residues: NADH-quinone oxidoreductase subunit H (347 aa).

8 helical membrane-spanning segments follow: residues 25 to 45, 95 to 115, 128 to 148, 168 to 188, 200 to 220, 251 to 271, 284 to 304, and 324 to 344; these read ILFM…VAAM, FMFT…FAII, IGIL…LFGG, ISYE…TGSF, GWYI…GVAV, FFIG…CLFF, FIPP…MFVL, and VCLP…LIFS.

This sequence belongs to the complex I subunit 1 family. NDH-1 is composed of 14 different subunits. Subunits NuoA, H, J, K, L, M, N constitute the membrane sector of the complex.

Its subcellular location is the cell inner membrane. The catalysed reaction is a quinone + NADH + 5 H(+)(in) = a quinol + NAD(+) + 4 H(+)(out). NDH-1 shuttles electrons from NADH, via FMN and iron-sulfur (Fe-S) centers, to quinones in the respiratory chain. The immediate electron acceptor for the enzyme in this species is believed to be ubiquinone. Couples the redox reaction to proton translocation (for every two electrons transferred, four hydrogen ions are translocated across the cytoplasmic membrane), and thus conserves the redox energy in a proton gradient. This subunit may bind ubiquinone. The protein is NADH-quinone oxidoreductase subunit H of Psychrobacter cryohalolentis (strain ATCC BAA-1226 / DSM 17306 / VKM B-2378 / K5).